The chain runs to 508 residues: MMLWYIVAGAGGLLIGYLIANYQINQKLRKAKEDAQTIIEKAEKEANEIKKKAIIEGREEVHRLREEFEKERSRREEELRALEERLLKREELLTRKEENLEKREQQVEELKANLEEKMREVEEKEKRIDEELKRLAGMTVEEARELILEEARQRYEHDLAKLYKEMKEQVEEEAEKEAKKVIAFAVQRYAPDYVGEITVSTVSLPSDDMKGRIIGREGRNIRTFEKITGVDLIIDDTPEVVVLSCFNPLRREIARITLEKLVADGRIHPARIEEMYEKAKQEVEKAIKEAGQEATFKAGVMGLHPELVKLLGKLKYRTSYGQNVLNHSIEVALLAGYMASELGLNADKARRGGLLHDIGKAVDQELEGSHTTIGAELARRYGEKEDIINMILSHHGEEEPMTPEAVLVAAADALSAARPGARRESLENYIKRLMKLEEIAKSFKYVEKAYAIQAGREIRVIVEPDKVDDALAEKLAYDISKKIEEELEYPGVLKVVVIREKRSVAYAK.

A helical membrane pass occupies residues 1–21; that stretch reads MMLWYIVAGAGGLLIGYLIAN. The region spanning 198-283 is the KH domain; sequence TVSTVSLPSD…EMYEKAKQEV (86 aa). The region spanning 324–417 is the HD domain; it reads VLNHSIEVAL…VAAADALSAA (94 aa).

The protein belongs to the RNase Y family.

The protein localises to the cell membrane. Functionally, endoribonuclease that initiates mRNA decay. The sequence is that of Ribonuclease Y from Thermotoga maritima (strain ATCC 43589 / DSM 3109 / JCM 10099 / NBRC 100826 / MSB8).